A 46-amino-acid chain; its full sequence is U2-plectoxin-Pt1a (46 aa).

Contains 4 disulfide bonds. In terms of tissue distribution, expressed by the venom gland.

The protein resides in the secreted. In terms of biological role, potent toxin that may paralyze and/or kill insect pests such as H.virescens (lepidoptera), S.exigua (beet armyworm) and M.sexta (tobacco hornworm). The polypeptide is U2-plectoxin-Pt1a (Plectreurys tristis (Spider)).